Consider the following 283-residue polypeptide: ATP synthase gamma chain (283 aa).

This sequence belongs to the ATPase gamma chain family. In terms of assembly, F-type ATPases have 2 components, CF(1) - the catalytic core - and CF(0) - the membrane proton channel. CF(1) has five subunits: alpha(3), beta(3), gamma(1), delta(1), epsilon(1). CF(0) has three main subunits: a, b and c.

The protein resides in the cell inner membrane. Functionally, produces ATP from ADP in the presence of a proton gradient across the membrane. The gamma chain is believed to be important in regulating ATPase activity and the flow of protons through the CF(0) complex. This chain is ATP synthase gamma chain, found in Ehrlichia ruminantium (strain Gardel).